A 378-amino-acid chain; its full sequence is tRNA (guanine(26)-N(2))-dimethyltransferase (378 aa).

In terms of domain architecture, Trm1 methyltransferase spans 4 to 374 (KEVTEGKVRI…KGYEEIIRCV (371 aa)). Residues arginine 44, arginine 69, aspartate 87, aspartate 114, and alanine 115 each coordinate S-adenosyl-L-methionine. The Zn(2+) site is built by cysteine 246, cysteine 249, cysteine 263, and cysteine 266.

It belongs to the class I-like SAM-binding methyltransferase superfamily. Trm1 family.

It carries out the reaction guanosine(26) in tRNA + 2 S-adenosyl-L-methionine = N(2)-dimethylguanosine(26) in tRNA + 2 S-adenosyl-L-homocysteine + 2 H(+). Its function is as follows. Dimethylates a single guanine residue at position 26 of a number of tRNAs using S-adenosyl-L-methionine as donor of the methyl groups. In Saccharolobus islandicus (strain Y.G.57.14 / Yellowstone #1) (Sulfolobus islandicus), this protein is tRNA (guanine(26)-N(2))-dimethyltransferase.